The following is a 619-amino-acid chain: DNA mismatch repair protein MutL (619 aa).

Belongs to the DNA mismatch repair MutL/HexB family.

This protein is involved in the repair of mismatches in DNA. It is required for dam-dependent methyl-directed DNA mismatch repair. May act as a 'molecular matchmaker', a protein that promotes the formation of a stable complex between two or more DNA-binding proteins in an ATP-dependent manner without itself being part of a final effector complex. In Myxococcus xanthus (strain DK1622), this protein is DNA mismatch repair protein MutL.